We begin with the raw amino-acid sequence, 333 residues long: MRTVRPRAGSLAYYPRKRAKGIVPKYQSWPEYNGQPMLQGFAGYKAGMTHVIMIDDHKKSPTEGKEVMVPVTVIEIPAMTVAAIRVYVKDTYGKHPLTEVWAENLEALSGRITKAKTNNAAKATEKINAAIGDVVEVMVLMYTKPTELTGVPKKVPDLMEIRVAGGSAQERFDYALSILGTDVDMKSLLSEGQFADITGITKGKGFQGAVKRFGITLRKRKHARTKKERHIGTLGPWTPHHVRWQVPMPGQMGFQQRTEFNKRIIKIGENADEINPAGGFLHYGLVRNNYVLIKGSIPGPAKRLVRIRSATRMGEQKIQAPVVEYVSLQSKQG.

It belongs to the universal ribosomal protein uL3 family. As to quaternary structure, part of the 50S ribosomal subunit. Forms a cluster with proteins L14 and L24e.

One of the primary rRNA binding proteins, it binds directly near the 3'-end of the 23S rRNA, where it nucleates assembly of the 50S subunit. This is Large ribosomal subunit protein uL3 from Methanocorpusculum labreanum (strain ATCC 43576 / DSM 4855 / Z).